We begin with the raw amino-acid sequence, 178 residues long: ATP-dependent protease subunit HslV (178 aa).

T7 is an active-site residue. Positions 162, 165, and 168 each coordinate Na(+).

This sequence belongs to the peptidase T1B family. HslV subfamily. A double ring-shaped homohexamer of HslV is capped on each side by a ring-shaped HslU homohexamer. The assembly of the HslU/HslV complex is dependent on binding of ATP.

The protein resides in the cytoplasm. It catalyses the reaction ATP-dependent cleavage of peptide bonds with broad specificity.. Allosterically activated by HslU binding. Its function is as follows. Protease subunit of a proteasome-like degradation complex believed to be a general protein degrading machinery. This Paraburkholderia phymatum (strain DSM 17167 / CIP 108236 / LMG 21445 / STM815) (Burkholderia phymatum) protein is ATP-dependent protease subunit HslV.